The following is a 20-amino-acid chain: Antifungal protein J (20 aa).

It is found in the vacuole. Its function is as follows. Inhibitor of serine proteases chymotrypsin, pepsin and trypsin. Has strong antifungal activity against the human pathogenic fungi C.albicans TIMM 1768, S.cerevisiae KCTC 7296 and T.beigelli KCTC 7707, but lacks antifungal activity against the plant pathogenic fungi C.gloeosporioides KACC 40003, C.coccodes KACC 40803 and D.bryoniae KACC 40669. Lacks hemolytic activity against human erythrocytes. This chain is Antifungal protein J, found in Solanum tuberosum (Potato).